Here is a 280-residue protein sequence, read N- to C-terminus: Exfoliative toxin A (280 aa).

Positions 1–38 (MNNSKIISKVLLSLSLFTVGASAFVIQDELMQKNHAKA) are cleaved as a signal peptide. Active-site charge relay system residues include H110, D158, and S233.

Belongs to the peptidase S1B family. The cofactor is Ca(2+).

Functionally, has serine protease-like properties and binds to the skin protein profilaggrin. Cleaves substrates after acidic residues. Exfoliative toxins cause impetigous diseases commonly referred as staphylococcal scalded skin syndrome (SSSS). The sequence is that of Exfoliative toxin A (eta) from Staphylococcus aureus.